The following is a 344-amino-acid chain: Lipase chaperone (344 aa).

The chain crosses the membrane as a helical span at residues 14 to 34 (AVVYGVVGLAAIAGVAMWSGA).

This sequence belongs to the lipase chaperone family.

It localises to the cell inner membrane. Functionally, may be involved in the folding of the extracellular lipase during its passage through the periplasm. In Burkholderia cepacia (Pseudomonas cepacia), this protein is Lipase chaperone (lifO).